The sequence spans 485 residues: 3-isopropylmalate dehydratase large subunit (485 aa).

Residues cysteine 367, cysteine 427, and cysteine 430 each contribute to the [4Fe-4S] cluster site. Residues 439 to 451 are compositionally biased toward polar residues; that stretch reads SPGQRAASTSNRN. The interval 439-462 is disordered; it reads SPGQRAASTSNRNFEGRQGKGGRT.

Belongs to the aconitase/IPM isomerase family. LeuC type 1 subfamily. In terms of assembly, heterodimer of LeuC and LeuD. The cofactor is [4Fe-4S] cluster.

The enzyme catalyses (2R,3S)-3-isopropylmalate = (2S)-2-isopropylmalate. Its pathway is amino-acid biosynthesis; L-leucine biosynthesis; L-leucine from 3-methyl-2-oxobutanoate: step 2/4. In terms of biological role, catalyzes the isomerization between 2-isopropylmalate and 3-isopropylmalate, via the formation of 2-isopropylmaleate. The sequence is that of 3-isopropylmalate dehydratase large subunit from Actinoplanes teichomyceticus.